Consider the following 436-residue polypeptide: Trigger factor (436 aa).

One can recognise a PPIase FKBP-type domain in the interval 161 to 246; it reads DDQLNIDFVG…VNSVAEPKLP (86 aa).

This sequence belongs to the FKBP-type PPIase family. Tig subfamily.

The protein localises to the cytoplasm. It carries out the reaction [protein]-peptidylproline (omega=180) = [protein]-peptidylproline (omega=0). In terms of biological role, involved in protein export. Acts as a chaperone by maintaining the newly synthesized protein in an open conformation. Functions as a peptidyl-prolyl cis-trans isomerase. This Pseudomonas aeruginosa (strain LESB58) protein is Trigger factor.